The chain runs to 97 residues: uncharacterized protein (97 aa).

Transmembrane regions (helical) follow at residues 5–25 (TLVAIVVFFGNGEPFHVSLSV), 27–47 (MVFVLLLSSTRIHEVVVLICY), and 77–97 (IISINDICIYGCIALTVVFIL).

The protein localises to the membrane. This is an uncharacterized protein from Saccharomyces cerevisiae (strain ATCC 204508 / S288c) (Baker's yeast).